Reading from the N-terminus, the 204-residue chain is Guanylate kinase (204 aa).

The 179-residue stretch at 6-184 (GLLIVLSGPA…AVDRIKAIVT (179 aa)) folds into the Guanylate kinase-like domain. 13–20 (GPAGVGKG) contacts ATP.

This sequence belongs to the guanylate kinase family.

It localises to the cytoplasm. The catalysed reaction is GMP + ATP = GDP + ADP. Essential for recycling GMP and indirectly, cGMP. The sequence is that of Guanylate kinase (gmk) from Halalkalibacterium halodurans (strain ATCC BAA-125 / DSM 18197 / FERM 7344 / JCM 9153 / C-125) (Bacillus halodurans).